Consider the following 100-residue polypeptide: NAD(P)H-quinone oxidoreductase subunit 4L, chloroplastic (100 aa).

The next 3 membrane-spanning stretches (helical) occupy residues 2–22 (ILQH…FGLI), 28–48 (VKIL…LVIF), and 61–81 (LFGL…LAIL).

This sequence belongs to the complex I subunit 4L family. NDH is composed of at least 16 different subunits, 5 of which are encoded in the nucleus.

The protein resides in the plastid. It is found in the chloroplast thylakoid membrane. It catalyses the reaction a plastoquinone + NADH + (n+1) H(+)(in) = a plastoquinol + NAD(+) + n H(+)(out). It carries out the reaction a plastoquinone + NADPH + (n+1) H(+)(in) = a plastoquinol + NADP(+) + n H(+)(out). NDH shuttles electrons from NAD(P)H:plastoquinone, via FMN and iron-sulfur (Fe-S) centers, to quinones in the photosynthetic chain and possibly in a chloroplast respiratory chain. The immediate electron acceptor for the enzyme in this species is believed to be plastoquinone. Couples the redox reaction to proton translocation, and thus conserves the redox energy in a proton gradient. The protein is NAD(P)H-quinone oxidoreductase subunit 4L, chloroplastic of Chara vulgaris (Common stonewort).